The chain runs to 738 residues: AP-4 complex subunit beta-1 (738 aa).

The hinge stretch occupies residues Cys-534–Leu-600. The segment at Ile-601–Ser-738 is ear; mediates interaction with TEPSIN.

It belongs to the adaptor complexes large subunit family. In terms of assembly, adaptor protein complex 4 (AP-4) is a heterotetramer composed of two large adaptins (epsilon-type subunit AP4E1 and beta-type subunit AP4B1), a medium adaptin (mu-type subunit AP4M1) and a small adaptin (sigma-type AP4S1). Interacts with TEPSIN; this interaction requires the presence of a functional AP-4 complex. Interacts with GRIA2; probably indirect it mediates the somatodendritic localization of GRIA2 in neurons.

It localises to the golgi apparatus. Its subcellular location is the trans-Golgi network membrane. In terms of biological role, component of the adaptor protein complex 4 (AP-4). Adaptor protein complexes are vesicle coat components involved both in vesicle formation and cargo selection. They control the vesicular transport of proteins in different trafficking pathways. AP-4 forms a non clathrin-associated coat on vesicles departing the trans-Golgi network (TGN) and may be involved in the targeting of proteins from the trans-Golgi network (TGN) to the endosomal-lysosomal system. It is also involved in protein sorting to the basolateral membrane in epithelial cells and the proper asymmetric localization of somatodendritic proteins in neurons. AP-4 is involved in the recognition and binding of tyrosine-based sorting signals found in the cytoplasmic part of cargos, but may also recognize other types of sorting signal. The polypeptide is AP-4 complex subunit beta-1 (Mus musculus (Mouse)).